Consider the following 431-residue polypeptide: MEFENLTKEEMEQLQKIYDDTISFERKIGIIIPTIFAVIILVGLVGNALVVIVAFGRQMRNSTNTLIIGLAISDLMFLLLCVPFTAVDYAAPTWIFPEWTCSMINFFQHTSAYCSVWTLTLMALDRYLAVVYPVESMTLRTPRNTVIALCFIYIIIIASQIPVGRMHGIYVYDFIMEKRSTCAILTIATAEATPTMARTYFMTFNVFGYVLPLGISVVLYGLMLRKLWDMPRPGNSQSVGGRNLTNRDSGSSIRRRPEATAAKRKVTRLVLCVLITWALCWLPLNVCFFMSGLAYPEPLVISHGVIMVIVQIASQVLAYTNSCLNPILYALMSQSFREGFIRVMKMLINKLSRGRFCTNYRRSALRTELTHYNQTPAHPANTVVQVSNGERSSLLKDNSSSATSVQPLRTSIQAKKTKNIGRSKSTRSYNL.

The Extracellular portion of the chain corresponds to 1 to 34 (MEFENLTKEEMEQLQKIYDDTISFERKIGIIIPT). N5 carries an N-linked (GlcNAc...) asparagine glycan. A helical membrane pass occupies residues 35-55 (IFAVIILVGLVGNALVVIVAF). The Cytoplasmic portion of the chain corresponds to 56-66 (GRQMRNSTNTL). Residues 67 to 87 (IIGLAISDLMFLLLCVPFTAV) form a helical membrane-spanning segment. The Extracellular segment spans residues 88-101 (DYAAPTWIFPEWTC). A disulfide bridge connects residues C101 and C182. The chain crosses the membrane as a helical span at residues 102–124 (SMINFFQHTSAYCSVWTLTLMAL). Over 125–143 (DRYLAVVYPVESMTLRTPR) the chain is Cytoplasmic. Residues 144 to 164 (NTVIALCFIYIIIIASQIPVG) traverse the membrane as a helical segment. Over 165-203 (RMHGIYVYDFIMEKRSTCAILTIATAEATPTMARTYFMT) the chain is Extracellular. Residues 204–224 (FNVFGYVLPLGISVVLYGLML) traverse the membrane as a helical segment. The Cytoplasmic segment spans residues 225–268 (RKLWDMPRPGNSQSVGGRNLTNRDSGSSIRRRPEATAAKRKVTR). The span at 235-252 (NSQSVGGRNLTNRDSGSS) shows a compositional bias: polar residues. Residues 235 to 257 (NSQSVGGRNLTNRDSGSSIRRRP) are disordered. Residues 269–289 (LVLCVLITWALCWLPLNVCFF) traverse the membrane as a helical segment. Over 290–298 (MSGLAYPEP) the chain is Extracellular. The helical transmembrane segment at 299–319 (LVISHGVIMVIVQIASQVLAY) threads the bilayer. The Cytoplasmic portion of the chain corresponds to 320-431 (TNSCLNPILY…RSKSTRSYNL (112 aa)). The span at 393-414 (SLLKDNSSSATSVQPLRTSIQA) shows a compositional bias: polar residues. Residues 393–431 (SLLKDNSSSATSVQPLRTSIQAKKTKNIGRSKSTRSYNL) are disordered. The segment covering 415–425 (KKTKNIGRSKS) has biased composition (basic residues).

It belongs to the G-protein coupled receptor 1 family. Exclusively expressed in the AIB interneuron.

The protein localises to the cell membrane. In terms of biological role, neuropeptide that controls movement such as roaming, foraging and backwards locomotion or 'reversals' in response to environmental cues such as food availability or volatile odorants such as octanol. Antagonizes AIB interneuron activity to control bacterial colonization and may negatively regulate the expression of immunity-related genes such as pqm-1 and dod-22 in response to infection by P.aeruginosa. The protein is Galanin-like G-protein coupled receptor npr-9 of Caenorhabditis elegans.